The following is a 429-amino-acid chain: Histidine--tRNA ligase (429 aa).

Belongs to the class-II aminoacyl-tRNA synthetase family. As to quaternary structure, homodimer.

The protein resides in the cytoplasm. The enzyme catalyses tRNA(His) + L-histidine + ATP = L-histidyl-tRNA(His) + AMP + diphosphate + H(+). This chain is Histidine--tRNA ligase, found in Prochlorococcus marinus (strain MIT 9515).